A 120-amino-acid polypeptide reads, in one-letter code: uncharacterized protein (120 aa).

It is found in the virion. This is an uncharacterized protein from Acanthamoeba polyphaga mimivirus (APMV).